Consider the following 629-residue polypeptide: MIRAFSFPVSPERGRLRGWLEGSLAGLCELHWLRERQEYRVQQALRLAQPGMGGAEAEDEEDADEDEDAAAARRAAAALEEQLEALPGLVWDLGQQLGDLSLESGGLEQESGRSSGFYEDPSSTGGPDSPPSTFCGDSGFSGSSSYGRLGPSEPRGIYASERPKSLGDASPSAPEVVGARAAVPRSFSAPYPTAGGSAGPEACSSAERRARAGPFLTPSPLHAVAMRSPRPCGRPPTDSPDAGGAGRPLDGYISALLRRRRRRGAGQPRTSPGGADGGPRRQNSVRQRPPDASPSPGSARPAREPSLERVGGHPTSPAALSRAWASSWESEAAPEPAAPPAAPSPPDSPAEGRLVKAQYIPGAQAATRGLPGRAARRKPPPLTRGRSVEQSPPRERPRAAGRRGRMAEASGRRGSPRARKASRSQSETSLLGRASAVPSGPPKYPTAEREEPRPPRPRRGPAPTLAAQAAGSCRRWRSTAEIDAADGRRVRPRAPAARVPGPGPSPSAPQRRLLYGCAGSDSECSAGRLGPLGRRGPAGGVGGGYGESESSASEGESPAFSSASSDSDGSGGLVWPQQLVAATAASGGGAGAGAPAGPAKVFVKIKASHALKKKILRFRSGSLKVMTTV.

The residue at position 6 (Ser-6) is a Phosphoserine. 2 disordered regions span residues 50–76 and 105–574; these read PGMG…RRAA and GGLE…GGLV. Positions 56–69 are enriched in acidic residues; the sequence is EAEDEEDADEDEDA. The stretch at 63–87 forms a coiled coil; that stretch reads ADEDEDAAAARRAAAALEEQLEALP. Low complexity predominate over residues 105–150; it reads GGLEQESGRSSGFYEDPSSTGGPDSPPSTFCGDSGFSGSSSYGRLG. Phosphoserine is present on residues Ser-165 and Ser-239. Omega-N-methylarginine is present on Arg-258. The segment covering 301-311 has biased composition (basic and acidic residues); sequence PAREPSLERVG. Positions 316–335 are enriched in low complexity; that stretch reads SPAALSRAWASSWESEAAPE. Over residues 336–348 the composition is skewed to pro residues; sequence PAAPPAAPSPPDS. Ser-426 and Ser-478 each carry phosphoserine. Residues 525–535 are compositionally biased toward low complexity; the sequence is SAGRLGPLGRR. Over residues 536–546 the composition is skewed to gly residues; sequence GPAGGVGGGYG. The segment covering 547-568 has biased composition (low complexity); the sequence is ESESSASEGESPAFSSASSDSD. Residues 626 to 629 carry the PDZ-binding motif; that stretch reads MTTV.

This sequence belongs to the dapper family. As to quaternary structure, can form homodimers and heterodimers with DACT1 or DACT3. Interacts with CSNK1D, PKA catalytic subunit, PKC-type kinase, DVL1, DVL3, VANGL1, VANGL2 and CTNND1. Interacts with DVL2.

Functionally, may be involved in regulation of intracellular signaling pathways during development. Specifically thought to play a role in canonical and/or non-canonical Wnt signaling pathways through interaction with DSH (Dishevelled) family proteins. The sequence is that of Dapper homolog 3 (DACT3) from Homo sapiens (Human).